The following is a 228-amino-acid chain: MDIDHCMPVFDMAYSDDNHLPYYIQRSTHHVVRDVDYTGFICYPLQVDLNDNVEVGADIYHMKIKTMRFNVDIYNNDVATKFPGWVRFIVFCTPPVSSWVNDGCSSLFSPFVGVNSFIDPKLLKRDGHGITVLHDGIYCLCHQEHFTRSFEFNFRGPGNYTLTSDVCWSPATNVDSIYVACVASWCGDSAFMLQSDSVSWVHKRFWQRPVLEFGQCLDDLPDHDNDCG.

The protein belongs to the benyvirus P25 protein family.

It is found in the host nucleus. It localises to the host cytoplasm. Functionally, probably influences symptom severity in a synergistic fashion with P25. This chain is Protein P26 (P26), found in Beta macrocarpa (Beet).